A 687-amino-acid polypeptide reads, in one-letter code: UvrABC system protein B (687 aa).

Residues 26–414 (EGLAAGEMYQ…GAVIEQVVRP (389 aa)) enclose the Helicase ATP-binding domain. Residue 39–46 (GVTGSGKT) participates in ATP binding. The short motif at 92–115 (YYDYYQPEAYVPASDTYIGKDASV) is the Beta-hairpin element. A Helicase C-terminal domain is found at 430-596 (QVDDLLSEIR…GIQKAVREII (167 aa)). One can recognise a UVR domain in the interval 630–665 (AKRLQQLERQMHKHAQNLEFEQAARLRDEIKRIKGW).

This sequence belongs to the UvrB family. Forms a heterotetramer with UvrA during the search for lesions. Interacts with UvrC in an incision complex.

It is found in the cytoplasm. Its function is as follows. The UvrABC repair system catalyzes the recognition and processing of DNA lesions. A damage recognition complex composed of 2 UvrA and 2 UvrB subunits scans DNA for abnormalities. Upon binding of the UvrA(2)B(2) complex to a putative damaged site, the DNA wraps around one UvrB monomer. DNA wrap is dependent on ATP binding by UvrB and probably causes local melting of the DNA helix, facilitating insertion of UvrB beta-hairpin between the DNA strands. Then UvrB probes one DNA strand for the presence of a lesion. If a lesion is found the UvrA subunits dissociate and the UvrB-DNA preincision complex is formed. This complex is subsequently bound by UvrC and the second UvrB is released. If no lesion is found, the DNA wraps around the other UvrB subunit that will check the other stand for damage. This Nitrosococcus oceani (strain ATCC 19707 / BCRC 17464 / JCM 30415 / NCIMB 11848 / C-107) protein is UvrABC system protein B.